The following is a 188-amino-acid chain: MIIIITGTPGSGKSTIVDLLSKKLGFEKLHVSSFLIQNKAFSEYDELRQSYVIDEEKAFQLIDSFIKDKNVVIETIYPSLISHADKVIVLRKDPRVLYTELKRRGWGELKIAENVMAEILGVISGEAKEYFGNICEINVTNKKPEEVVEQILSNNCDNVDWLNIEEIQDLLISLDKVISSYEDSISDE.

Positions 10, 12, 13, 14, and 15 each coordinate ATP. Positions 30 to 53 are NMP; that stretch reads HVSSFLIQNKAFSEYDELRQSYVI. An LID region spans residues 103–113; that stretch reads RRGWGELKIAE. The ATP site is built by arginine 104 and lysine 142.

This sequence belongs to the adenylate kinase family. AK6 subfamily. In terms of assembly, interacts with uS11. Not a structural component of 40S pre-ribosomes, but transiently interacts with them by binding to uS11.

The catalysed reaction is AMP + ATP = 2 ADP. It carries out the reaction ATP + H2O = ADP + phosphate + H(+). In terms of biological role, broad-specificity nucleoside monophosphate (NMP) kinase that catalyzes the reversible transfer of the terminal phosphate group between nucleoside triphosphates and monophosphates. Also has ATPase activity. Involved in the late maturation steps of the 30S ribosomal particles, specifically 16S rRNA maturation. While NMP activity is not required for ribosome maturation, ATPase activity is. Associates transiently with small ribosomal subunit protein uS11. ATP hydrolysis breaks the interaction with uS11. May temporarily remove uS11 from the ribosome to enable a conformational change of the ribosomal RNA that is needed for the final maturation step of the small ribosomal subunit. This is Putative adenylate kinase from Sulfurisphaera tokodaii (strain DSM 16993 / JCM 10545 / NBRC 100140 / 7) (Sulfolobus tokodaii).